The primary structure comprises 3527 residues: BEACH domain-containing protein A2 (3527 aa).

Disordered regions lie at residues alanine 25–serine 46, serine 385–arginine 423, and glutamate 454–glycine 490. The span at alanine 28 to serine 46 shows a compositional bias: low complexity. Over residues serine 455 to threonine 469 the composition is skewed to low complexity. The segment covering serine 472 to asparagine 481 has biased composition (polar residues). 5 LRR repeats span residues lysine 1447–aspartate 1470, phenylalanine 1499–asparagine 1522, serine 1542–leucine 1565, alanine 1566–valine 1588, and serine 2001–serine 2024. Disordered regions lie at residues glycine 1992–serine 2023 and isoleucine 2046–serine 2081. Positions valine 1998–aspartate 2020 are enriched in polar residues. LRR repeat units follow at residues threonine 2128–glutamate 2151, leucine 2221–isoleucine 2247, and valine 2313–aspartate 2336. The segment at valine 2658–isoleucine 2680 is disordered. A compositionally biased stretch (polar residues) spans threonine 2666 to glycine 2675. The BEACH-type PH domain occupies glutamate 2704–leucine 2871. A BEACH domain is found at glycine 2896 to arginine 3188. WD repeat units lie at residues histidine 3272–serine 3311, alanine 3322–glutamine 3361, aspartate 3410–serine 3451, and phenylalanine 3483–serine 3522.

This chain is BEACH domain-containing protein A2, found in Arabidopsis thaliana (Mouse-ear cress).